The following is a 349-amino-acid chain: Lachesin (349 aa).

Residues 1-18 form the signal peptide; it reads MDLRLYTIFVGFFSVVYA. Residues 22–127 enclose the Ig-like V-type domain; that stretch reads PTISYISQEQ…NKITAEVDLQ (106 aa). A disulfide bond links Cys-43 and Cys-110. 2 Ig-like C2-type domains span residues 132-218 and 222-315; these read PVIS…IAVE and PPVI…VELF. Asn-137 carries an N-linked (GlcNAc...) asparagine glycan. 2 cysteine pairs are disulfide-bonded: Cys-154–Cys-201 and Cys-244–Cys-299. Residue Gly-332 is the site of GPI-anchor amidated glycine attachment. Positions 333 to 349 are cleaved as a propeptide — removed in mature form; that stretch reads DAAEISTSMALILISTI.

The N-terminus is blocked. Expressed by all neurogenic cells early, but only those cells that become neuroblasts continue to express it. Expressed by neuroblasts, ganglion mother cells and neurons early in their lives, but expression becomes restricted to a subset of neurons as development progresses. Expressed by sensory neurons as they delaminate from the body wall ectoderm. It is also present on growing axons of the CNS and PNS and becomes restricted to a subset of axons later in development.

The protein resides in the cell membrane. Functionally, may play a role in early neuronal differentiation and axon outgrowth. The protein is Lachesin (LAC) of Schistocerca americana (American grasshopper).